The chain runs to 249 residues: 23S rRNA (guanosine-2'-O-)-methyltransferase RlmB (249 aa).

S-adenosyl-L-methionine contacts are provided by Gly-200, Ile-220, and Leu-229.

Belongs to the class IV-like SAM-binding methyltransferase superfamily. RNA methyltransferase TrmH family. RlmB subfamily.

It localises to the cytoplasm. It catalyses the reaction guanosine(2251) in 23S rRNA + S-adenosyl-L-methionine = 2'-O-methylguanosine(2251) in 23S rRNA + S-adenosyl-L-homocysteine + H(+). In terms of biological role, specifically methylates the ribose of guanosine 2251 in 23S rRNA. The sequence is that of 23S rRNA (guanosine-2'-O-)-methyltransferase RlmB from Xylella fastidiosa (strain 9a5c).